The primary structure comprises 103 residues: UPF0145 protein BC_5181 (103 aa).

Belongs to the UPF0145 family.

The sequence is that of UPF0145 protein BC_5181 from Bacillus cereus (strain ATCC 14579 / DSM 31 / CCUG 7414 / JCM 2152 / NBRC 15305 / NCIMB 9373 / NCTC 2599 / NRRL B-3711).